The sequence spans 481 residues: Proline--tRNA ligase (481 aa).

Belongs to the class-II aminoacyl-tRNA synthetase family. ProS type 3 subfamily. Homodimer.

It localises to the cytoplasm. It carries out the reaction tRNA(Pro) + L-proline + ATP = L-prolyl-tRNA(Pro) + AMP + diphosphate. Its function is as follows. Catalyzes the attachment of proline to tRNA(Pro) in a two-step reaction: proline is first activated by ATP to form Pro-AMP and then transferred to the acceptor end of tRNA(Pro). This chain is Proline--tRNA ligase, found in Chloroherpeton thalassium (strain ATCC 35110 / GB-78).